A 47-amino-acid polypeptide reads, in one-letter code: Conotoxin reg3.11 (47 aa).

Positions 1-31 are excised as a propeptide; that stretch reads DQPVERHAENKRHLIPAVMRAMTMNADRRVQ. 3 cysteine pairs are disulfide-bonded: Cys-32–Cys-44, Cys-33–Cys-42, and Cys-38–Cys-45. Residues 46–47 constitute a propeptide that is removed on maturation; sequence YH.

Belongs to the conotoxin M superfamily. Expressed by the venom duct.

It is found in the secreted. This is Conotoxin reg3.11 from Conus regius (Crown cone).